A 462-amino-acid polypeptide reads, in one-letter code: F-box/LRR-repeat protein At5g38396 (462 aa).

An F-box domain is found at 1 to 47 (MDLLRNIPDELICHILSFLTTKEAALTSVLSKRWRNLLAFVSNLHID). LRR repeat units lie at residues 118 to 146 (SIDL…KLHR), 148 to 175 (CIGQ…ELDY), 197 to 222 (VDAF…TMSS), 302 to 333 (CLDL…SIKS), and 334 to 359 (AENR…VLEG).

This Arabidopsis thaliana (Mouse-ear cress) protein is F-box/LRR-repeat protein At5g38396.